A 212-amino-acid chain; its full sequence is Ribonuclease HII (212 aa).

An RNase H type-2 domain is found at 1–204; the sequence is MRVGIDEAGR…LRSTAPLYYI (204 aa). Aspartate 6, glutamate 7, and aspartate 103 together coordinate a divalent metal cation.

It belongs to the RNase HII family. It depends on Mn(2+) as a cofactor. Mg(2+) is required as a cofactor.

Its subcellular location is the cytoplasm. The catalysed reaction is Endonucleolytic cleavage to 5'-phosphomonoester.. In terms of biological role, endonuclease that specifically degrades the RNA of RNA-DNA hybrids. The protein is Ribonuclease HII of Saccharolobus solfataricus (strain ATCC 35092 / DSM 1617 / JCM 11322 / P2) (Sulfolobus solfataricus).